Consider the following 202-residue polypeptide: Protein GrpE (202 aa).

Residues 1–14 (MENTQENPTSQNPT) show a composition bias toward polar residues. The interval 1-58 (MENTQENPTSQNPTPADEAARQAAEAASGEPQDQARQPAAAAGEQPAQAQPAGAEAAL) is disordered. Residues 21–58 (RQAAEAASGEPQDQARQPAAAAGEQPAQAQPAGAEAAL) are compositionally biased toward low complexity.

It belongs to the GrpE family. As to quaternary structure, homodimer.

The protein resides in the cytoplasm. In terms of biological role, participates actively in the response to hyperosmotic and heat shock by preventing the aggregation of stress-denatured proteins, in association with DnaK and GrpE. It is the nucleotide exchange factor for DnaK and may function as a thermosensor. Unfolded proteins bind initially to DnaJ; upon interaction with the DnaJ-bound protein, DnaK hydrolyzes its bound ATP, resulting in the formation of a stable complex. GrpE releases ADP from DnaK; ATP binding to DnaK triggers the release of the substrate protein, thus completing the reaction cycle. Several rounds of ATP-dependent interactions between DnaJ, DnaK and GrpE are required for fully efficient folding. This chain is Protein GrpE, found in Paraburkholderia phymatum (strain DSM 17167 / CIP 108236 / LMG 21445 / STM815) (Burkholderia phymatum).